The following is a 454-amino-acid chain: UDP-N-acetylmuramoylalanine--D-glutamate ligase (454 aa).

119–125 is a binding site for ATP; that stretch reads GSNGKTT.

It belongs to the MurCDEF family.

The protein localises to the cytoplasm. The enzyme catalyses UDP-N-acetyl-alpha-D-muramoyl-L-alanine + D-glutamate + ATP = UDP-N-acetyl-alpha-D-muramoyl-L-alanyl-D-glutamate + ADP + phosphate + H(+). It functions in the pathway cell wall biogenesis; peptidoglycan biosynthesis. Cell wall formation. Catalyzes the addition of glutamate to the nucleotide precursor UDP-N-acetylmuramoyl-L-alanine (UMA). The polypeptide is UDP-N-acetylmuramoylalanine--D-glutamate ligase (Latilactobacillus sakei subsp. sakei (strain 23K) (Lactobacillus sakei subsp. sakei)).